Here is a 218-residue protein sequence, read N- to C-terminus: Small ribosomal subunit protein uS3c (218 aa).

Residues V47–A118 form the KH type-2 domain.

Belongs to the universal ribosomal protein uS3 family. In terms of assembly, part of the 30S ribosomal subunit.

It is found in the plastid. The protein resides in the chloroplast. This is Small ribosomal subunit protein uS3c (rps3) from Nymphaea alba (White water-lily).